The primary structure comprises 346 residues: MNLGVIFGAKSFEHEISIVSAIVLKNVLKQGLKFIFCDANRDFYLIEQKDMRANFFSSGKYKNSKKLSLAKGGFYTHSLFGANKVECDVIINLIHGMDGEDGKIAALFEFYGVKYIGPRLEASALSYNKELTKFLAQKAGVKALDYEMLTRQSEPKFHYPIILKPARLGSSIGVSVVHDDSELAYAKDVAFEFDKDVLVEPFIKGVKEYNLAGCRIDGKIKFSIVEEPKKKEFLDYEQKYLSFSNENKVKEAEISEELKQKLKFNFSKIYDCGFDGAIIRCDFFVIDDEVYLNEINPNPGSLANYLFEDFESTLNALANSLPKEREIKIDYKFINSITSVKGSGKL.

Residues 133-326 (KFLAQKAGVK…LANSLPKERE (194 aa)) form the ATP-grasp domain. 159 to 209 (YPIILKPARLGSSIGVSVVHDDSELAYAKDVAFEFDKDVLVEPFIKGVKEY) serves as a coordination point for ATP. Asp-282, Glu-294, and Asn-296 together coordinate Mg(2+).

Belongs to the D-alanine--D-alanine ligase family. Requires Mg(2+) as cofactor. Mn(2+) is required as a cofactor.

The protein localises to the cytoplasm. It carries out the reaction 2 D-alanine + ATP = D-alanyl-D-alanine + ADP + phosphate + H(+). The protein operates within cell wall biogenesis; peptidoglycan biosynthesis. Its function is as follows. Cell wall formation. This chain is D-alanine--D-alanine ligase, found in Campylobacter concisus (strain 13826).